The chain runs to 487 residues: E3 ubiquitin-protein ligase RNF8 (487 aa).

The FHA domain maps to 38 to 92; that stretch reads VTIGRGFSVTYQLISKVCPLMISRNHCVLKQNPEGQWTIMDNKSLNGVWLNRERL. The interval 68–72 is required for interaction with PIWIL1; it reads QNPEG. Positions 135–195 are disordered; sequence CLAPKNDHTT…PEKLHGKGEA (61 aa). Phosphoserine is present on Ser157. The span at 184-193 shows a compositional bias: basic and acidic residues; sequence AEPEKLHGKG. The segment at 405–443 adopts an RING-type zinc-finger fold; it reads CIICSEYFIEAVTLNCAHSFCSFCISEWMKRKVECPICR.

It belongs to the RNF8 family. In terms of assembly, homodimer. Forms a E2-E3 ubiquitin ligase complex composed of the RNF8 homodimer and a E2 heterodimer of UBE2N and UBE2V2. Interacts with class III E2s, including UBE2E1, UBE2E2, and UBE2E3 and with UBE2N. Interacts with RXRA. Interacts (via FHA domain) with phosphorylated HERC2 (via C-terminus). Interacts with PIWIL1; leading to sequester RNF8 in the cytoplasm. Interacts with WRAP53/TCAB1. Autoubiquitinated through 'Lys-48' and 'Lys-63' of ubiquitin. 'Lys-63' polyubiquitination is mediated by UBE2N. 'Lys-29'-type polyubiquitination is also observed, but it doesn't require its own functional RING-type zinc finger.

The protein resides in the nucleus. It is found in the cytoplasm. Its subcellular location is the midbody. It localises to the chromosome. The protein localises to the telomere. The enzyme catalyses S-ubiquitinyl-[E2 ubiquitin-conjugating enzyme]-L-cysteine + [acceptor protein]-L-lysine = [E2 ubiquitin-conjugating enzyme]-L-cysteine + N(6)-ubiquitinyl-[acceptor protein]-L-lysine.. It functions in the pathway protein modification; protein ubiquitination. Its function is as follows. E3 ubiquitin-protein ligase that plays a key role in DNA damage signaling via 2 distinct roles: by mediating the 'Lys-63'-linked ubiquitination of histones H2A and H2AX and promoting the recruitment of DNA repair proteins at double-strand breaks (DSBs) sites, and by catalyzing 'Lys-48'-linked ubiquitination to remove target proteins from DNA damage sites. Following DNA DSBs, it is recruited to the sites of damage by ATM-phosphorylated MDC1 and catalyzes the 'Lys-63'-linked ubiquitination of histones H2A and H2AX, thereby promoting the formation of TP53BP1 and BRCA1 ionizing radiation-induced foci (IRIF). Also controls the recruitment of UIMC1-BRCC3 (RAP80-BRCC36) and PAXIP1/PTIP to DNA damage sites. Promotes the recruitment of NBN to DNA damage sites by catalyzing 'Lys-6'-linked ubiquitination of NBN. Also recruited at DNA interstrand cross-links (ICLs) sites and catalyzes 'Lys-63'-linked ubiquitination of histones H2A and H2AX, leading to recruitment of FAAP20 and Fanconi anemia (FA) complex, followed by interstrand cross-link repair. H2A ubiquitination also mediates the ATM-dependent transcriptional silencing at regions flanking DSBs in cis, a mechanism to avoid collision between transcription and repair intermediates. Promotes the formation of 'Lys-63'-linked polyubiquitin chains via interactions with the specific ubiquitin-conjugating UBE2N/UBC13 and ubiquitinates non-histone substrates such as PCNA. Substrates that are polyubiquitinated at 'Lys-63' are usually not targeted for degradation. Also catalyzes the formation of 'Lys-48'-linked polyubiquitin chains via interaction with the ubiquitin-conjugating UBE2L6/UBCH8, leading to degradation of substrate proteins such as CHEK2, JMJD2A/KDM4A and KU80/XRCC5: it is still unclear how the preference toward 'Lys-48'- versus 'Lys-63'-linked ubiquitination is regulated but it could be due to RNF8 ability to interact with specific E2 specific ligases. For instance, interaction with phosphorylated HERC2 promotes the association between RNF8 and UBE2N/UBC13 and favors the specific formation of 'Lys-63'-linked ubiquitin chains. Promotes non-homologous end joining (NHEJ) by promoting the 'Lys-48'-linked ubiquitination and degradation the of KU80/XRCC5. Following DNA damage, mediates the ubiquitination and degradation of JMJD2A/KDM4A in collaboration with RNF168, leading to unmask H4K20me2 mark and promote the recruitment of TP53BP1 at DNA damage sites. Following DNA damage, mediates the ubiquitination and degradation of POLD4/p12, a subunit of DNA polymerase delta. In the absence of POLD4, DNA polymerase delta complex exhibits higher proofreading activity. In addition to its function in damage signaling, also plays a role in higher-order chromatin structure by mediating extensive chromatin decondensation. Involved in the activation of ATM by promoting histone H2B ubiquitination, which indirectly triggers histone H4 'Lys-16' acetylation (H4K16ac), establishing a chromatin environment that promotes efficient activation of ATM kinase. Required in the testis, where it plays a role in the replacement of histones during spermatogenesis. At uncapped telomeres, promotes the joining of deprotected chromosome ends by inducing H2A ubiquitination and TP53BP1 recruitment, suggesting that it may enhance cancer development by aggravating telomere-induced genome instability in case of telomeric crisis. Promotes the assembly of RAD51 at DNA DSBs in the absence of BRCA1 and TP53BP1 Also involved in class switch recombination in immune system, via its role in regulation of DSBs repair. May be required for proper exit from mitosis after spindle checkpoint activation and may regulate cytokinesis. May play a role in the regulation of RXRA-mediated transcriptional activity. Not involved in RXRA ubiquitination by UBE2E2. This Rattus norvegicus (Rat) protein is E3 ubiquitin-protein ligase RNF8.